The primary structure comprises 435 residues: ATP-dependent protease ATPase subunit HslU (435 aa).

ATP is bound by residues isoleucine 18, 60–65 (GVGKTE), aspartate 248, glutamate 313, and arginine 385.

It belongs to the ClpX chaperone family. HslU subfamily. In terms of assembly, a double ring-shaped homohexamer of HslV is capped on each side by a ring-shaped HslU homohexamer. The assembly of the HslU/HslV complex is dependent on binding of ATP.

It localises to the cytoplasm. Functionally, ATPase subunit of a proteasome-like degradation complex; this subunit has chaperone activity. The binding of ATP and its subsequent hydrolysis by HslU are essential for unfolding of protein substrates subsequently hydrolyzed by HslV. HslU recognizes the N-terminal part of its protein substrates and unfolds these before they are guided to HslV for hydrolysis. The protein is ATP-dependent protease ATPase subunit HslU of Rhizobium meliloti (strain 1021) (Ensifer meliloti).